We begin with the raw amino-acid sequence, 313 residues long: Serine/threonine-protein phosphatase CPPED1 (313 aa).

S2 carries the phosphoserine modification. The catalytic stretch occupies residues 47-250 (KAWATGDCDN…AVFSGHYHRN (204 aa)). Positions 53, 90, 127, and 246 each coordinate a divalent metal cation. S293 is subject to Phosphoserine.

The protein belongs to the metallophosphoesterase superfamily. CPPED1 family. Requires a divalent metal cation as cofactor.

The protein localises to the cytoplasm. It catalyses the reaction O-phospho-L-seryl-[protein] + H2O = L-seryl-[protein] + phosphate. The enzyme catalyses O-phospho-L-threonyl-[protein] + H2O = L-threonyl-[protein] + phosphate. Its function is as follows. Protein phosphatase that dephosphorylates AKT family kinase specifically at 'Ser-473', blocking cell cycle progression and promoting cell apoptosis. May play an inhibitory role in glucose uptake by adipocytes. The sequence is that of Serine/threonine-protein phosphatase CPPED1 (CPPED1) from Bos taurus (Bovine).